The sequence spans 409 residues: Phospholipase ABHD3 (409 aa).

Residues 26-46 (GFFGSGVGLSLILGFSVAYAF) traverse the membrane as a helical; Signal-anchor for type II membrane protein segment. One can recognise an AB hydrolase-1 domain in the interval 140-233 (PTILLLPGLT…MLLLNYLGKI (94 aa)). Active-site charge relay system residues include Ser-220, Asp-346, and His-375.

It belongs to the AB hydrolase superfamily. AB hydrolase 4 family.

It localises to the membrane. It catalyses the reaction a 1,2-diacyl-sn-glycero-3-phosphocholine + H2O = a 1-acyl-sn-glycero-3-phosphocholine + a fatty acid + H(+). The enzyme catalyses a 1,2-diacyl-sn-glycero-3-phosphocholine + H2O = a 2-acyl-sn-glycero-3-phosphocholine + a fatty acid + H(+). The catalysed reaction is 1-tetradecanoyl-2-(9Z,12Z-octadecadienoyl)-sn-glycero-3-phosphocholine + H2O = 2-(9Z,12Z-octadecadienoyl)-sn-glycero-3-phosphocholine + tetradecanoate + H(+). It carries out the reaction 1-tetradecanoyl-2-(9Z,12Z-octadecadienoyl)-sn-glycero-3-phosphocholine + H2O = 1-tetradecanoyl-sn-glycero-3-phosphocholine + (9Z,12Z)-octadecadienoate + H(+). It catalyses the reaction 1-tetradecanoyl-2-(5Z,8Z,11Z,14Z-eicosatetraenoyl)-sn-glycero-3-phosphocholine + H2O = 2-(5Z,8Z,11Z,14Z)-eicosatetraenoyl-sn-glycero-3-phosphocholine + tetradecanoate + H(+). The enzyme catalyses 1-tetradecanoyl-2-(4Z,7Z,10Z,13Z,16Z,19Z-docosahexaenoyl)-sn-glycero-3-phosphocholine + H2O = 2-(4Z,7Z,10Z,13Z,16Z,19Z-docosahexaenoyl)-sn-glycero-3-phosphocholine + tetradecanoate + H(+). The catalysed reaction is 1,2-ditetradecanoyl-sn-glycero-3-phosphocholine + H2O = 2-tetradecanoyl-sn-glycero-3-phosphocholine + tetradecanoate + H(+). It carries out the reaction 1-octadecanoyl-2-acetyl-sn-glycero-3-phosphocholine + H2O = 1-octadecanoyl-sn-glycero-3-phosphocholine + acetate + H(+). It catalyses the reaction 1,2-ditetradecanoyl-sn-glycero-3-phosphocholine + H2O = 1-tetradecanoyl-sn-glycero-3-phosphocholine + tetradecanoate + H(+). The enzyme catalyses 1-octadecanoyl-2-pentanoyl-sn-glycero-3-phosphocholine + H2O = pentanoate + 1-octadecanoyl-sn-glycero-3-phosphocholine + H(+). The catalysed reaction is 1-octadecanoyl-2-hexanoyl-sn-glycero-3-phosphocholine + H2O = hexanoate + 1-octadecanoyl-sn-glycero-3-phosphocholine + H(+). It carries out the reaction 1-octadecanoyl-2-octanoyl-sn-glycero-3-phosphocholine + H2O = 1-octadecanoyl-sn-glycero-3-phosphocholine + octanoate + H(+). It catalyses the reaction 1-octadecanoyl-2-nonanoyl-sn-glycero-3-phosphocholine + H2O = nonanoate + 1-octadecanoyl-sn-glycero-3-phosphocholine + H(+). The enzyme catalyses 1-O-hexadecyl-2-nonadioyl-sn-glycero-3-phosphocholine + H2O = nonanedioate + 1-O-hexadecyl-sn-glycero-3-phosphocholine + H(+). The catalysed reaction is 1-hexadecanoyl-2-nonadioyl-sn-glycero-3-phosphocholine + H2O = nonanedioate + 1-hexadecanoyl-sn-glycero-3-phosphocholine + H(+). It carries out the reaction 1-hexadecanoyl-2-(9-oxononanoyl)-sn-glycero-3-phosphocholine + H2O = 9-oxononanoate + 1-hexadecanoyl-sn-glycero-3-phosphocholine + H(+). It catalyses the reaction 1-hexadecanoyl-2-(5-oxopentanoyl)-sn-glycero-3-phosphocholine + H2O = 5-oxopentanoate + 1-hexadecanoyl-sn-glycero-3-phosphocholine + H(+). The enzyme catalyses 1-hexadecanoyl-2-glutaroyl-sn-glycero-3-phosphocholine + H2O = glutarate + 1-hexadecanoyl-sn-glycero-3-phosphocholine + H(+). The catalysed reaction is 1-O-hexadecyl-2-acetyl-sn-glycero-3-phosphocholine + H2O = 1-O-hexadecyl-sn-glycero-3-phosphocholine + acetate + H(+). In terms of biological role, phospholipase that may play a role in phospholipids remodeling. May selectively cleave myristate (C14)-containing phosphatidylcholines through its predominant phospholipase 1 activity, cleaving preferentially acyl groups in sn1 position. In parallel, may have a minor phospholipase 2 activity acting on acyl groups in position sn2. In addition to (C14)-containing phosphatidylcholines, may also act on other medium-chain-containing and oxidatively truncated phospholipids. This Homo sapiens (Human) protein is Phospholipase ABHD3.